A 1890-amino-acid polypeptide reads, in one-letter code: MRRKLLLLLCFIGLFSLISTAPAPNNVGLESEFTEGHAETINLEEVEFNHPSILPEHPDNFRQDKLAARKRQSLYVTKTRLPPNLYAIDYSLWFQPYFPSPGVQYAPEKNFTFDGRASIQVEALVASDRFILNAYNFKIQSYKVVDIDGTVVPINSISQDDTTQQLSLITNANGVVAGQIYNIEFVYTGIINPYTDGGVYYTSYNDPQGNTHYMIATHMEPFSARKVFPSLDEPSYKAKFTITVQYPASQVALSNMMETEPTKIDNIWSTITFPQTPKMSSYLIAFAVGPYVNSQYVNKHNTLTRAWGWPGTEQYLQFAAQNAGECLYQLGEYTGIKFPLSKADQLGMPEFLAGAMENWGLIIYKYQYIAYNPTTMTTRNMEAAAKVMCHELAHQWFGDLVTTAWWDDLFLNEGFADYFMTFIQKSVYPQQATYLDTLQVLDELQVGLTADVRYDAHPLVYPDGPAFDDITYNKGASMLRMLSDVLGADVFKQGIRAYLQKMQYSNANDFDLFSTLTDTAKSNNILDWCGLPLNVTDFMQPYIHQTNHPLIRYNNNQKIGGSTFSQEPFLDISDLTATPWNYTWSIPLTSANLRHADPYKQWLPRQQGCANMNENIQEERIKEPNKRAVQWELTSITSATYGRIIYDDIGFDRILKLIKQDDINDNLKLTLLADEYNYMLREKKANRPFGYNRFLDLAKVIFNTQSFTNYPSYGVFAQAQPVLEQIAQLYRDGIDAEFVPRLYKLFFQNSYNQLKWQDTSIWDTDTFSEVFLPFAVRYDIGDVQNRTLNMFANVKSACINSLNGTAWCNPYSTNLRKAIYCGAAKYAPATSDYFFQMLHSYNKEVITNPYFYQEYMALLEGMSCTQSPATLKVLIRLFTTSTLNPSTIFGFLKYNPAASDVLYNYFMANPQLVNSTMLDAYLDAMTYNWNSYFREGQLSTLMNTLTLTNDQFDIFDFYINRVSLMFEYKSTYALPTYNWLYDNLVVIGKTPWEKTPNIDAVFPYYKLDLQVNIPGSGPYQWYENMTFSATSTVTFQLVSPTSSITINAHRLMFDPVSIRLYNENDENAHTPIPIDFSKVMKDYDKGTVTIPTMNNTVLYPNQYSLFIEYTGFIFQNPDEGDASNTYLGGLNNRKGWIFTTDFEGGPGARSLLPCWDEPSYKGQFEVSVFHPTDMIALSNEVDIQRTIYDNGWTTTKFATTNQMSTYLLALCVGHFSNLATVTRTGVLTRVWTWSGMEQYGEFALNVTAGTIDFMENYFSYDFPLKKLDVMALPEYTMNAGAMENWGLIIGEYSLFMFDPDYATTRDITEVAETTAHEVVHQWFGDIVTLDWWNDIFLNEGFAQYWFANGIDNTFPEQHAYSIDYNRFYMNHIALKYDCIPGVAKPVISDTPPVFGIEPYYKGSALLNLLNNVLTPAVFQEGLSSYLTQYGYVNASPRNLWTSLTVAAQRHNITDWNGQPLDVSSFMDPYTLQTSYPIITLTLRGTSTVQANQQSCMSDETLWNVPLFTQTPGALDFNWFVNFTGGNDATWLRPLPTGYRVDNAGSTSFARINYDDKSWYSIQAQLLSNMNTMSSTTRAMLLDDANFFYQSGRWEMTKFLDLTLYLVNEDSLAPWEQAIEFFTEMLNRFQYQPEIDTVRNYVIQITKNAVSKFQWNTNGLWANDRIVQLLVNVNNLAVNRQSRQVALTLFNNFVLKCKYSLSGTGKCSGIHPNLRQPTYCYGLRQSNNIDDFTTVNNLYSWFVQNAGYLQTDGSNLLNALGCVQNLDLQKTMLRSILSGDYPPSLLNSIAVHDDSSDVLYNFLLDNTQDILNAPFDFSLYVKAMFQNWSTSNQLELAKDFQNSSNYNLLNAAQKNIYKQGILTVNSNANWMLIYKTPFLEWIQKNFGAPNL.

Positions 1–20 (MRRKLLLLLCFIGLFSLIST) are cleaved as a signal peptide. N110 is a glycosylation site (N-linked (GlcNAc...) asparagine). Substrate is bound by residues E220 and 354-358 (GAMEN). Position 390 (H390) interacts with Zn(2+). E391 (proton acceptor) is an active-site residue. Residues H394 and E413 each coordinate Zn(2+). Residues N534, N581, N785, N803, N914, N1024, and N1094 are each glycosylated (N-linked (GlcNAc...) asparagine). E1143 is a substrate binding site. N1245 carries an N-linked (GlcNAc...) asparagine glycan. 1280-1284 (GAMEN) contributes to the substrate binding site. Residue H1316 participates in Zn(2+) binding. The active-site Proton acceptor is E1317. Positions 1320 and 1339 each coordinate Zn(2+). N-linked (GlcNAc...) asparagine glycosylation is found at N1451, N1521, N1826, and N1841.

The protein belongs to the peptidase M1 family. The cofactor is Zn(2+).

Putative aminopeptidase which plays a role in oocyte maturation. The chain is Putative aminopeptidase-2 from Caenorhabditis elegans.